We begin with the raw amino-acid sequence, 2667 residues long: eIF-2-alpha kinase activator GCN1 (2667 aa).

HEAT repeat units follow at residues 19-56 (DSFYSEIKELEKSIQSNKLSERKNTLTRINSIGKHELS), 95-132 (QWIFSLVQSLKQLFKDISSATNTSLVTDELKINIVKFT), 159-198 (SFSLVLLNYFIDQIQSNSDLTTLLFAAQELLYRELTLQHM), 293-330 (DLQSIILPPLSRHIKRDQDQVFKILIFILENLSSDFNV), 336-375 (LLKSMLLPMLLPVIQSTISIEENRKLLKKTFTLIIERSKD), 398-439 (SQKL…SISI), 466-503 (ELPEQTIKIITNSLKNDDDIIKGQVILSLSKSLGPEAN), and 794-832 (LLNEELVKLMVKALSYEPVLAITQQQWSIYHTLPTELFV). Residues 842–879 (RNDRKVKPKTAEEQRDEESRKRIEEKKKIQSGELEKQE) form a disordered region. HEAT repeat units follow at residues 929-967 (PIIVALLQLMKHEITNHQFTQVFEKLICCVPSRFKLDRS), 985-1024 (LSEIQILGFIQKILTHIRESIAKEALSGFAFNYFWPIIKN), 1085-1122 (GVETSDIGELMEGIISKHVQVRSICLQAIEKIPSIYSP), 1199-1237 (HMIPEIVDNLFEIYEQNYPDEIRETPITSKFRISVATAL), 1290-1330 (GELL…HMDA), 1333-1370 (PKVSIVIDKLVDALSIPSESVQVGISKCIAQLIPSFKK), 1371-1407 (QGDRLIPMLLEKLKNSSGNYADRRGAAFGLAGSVKGL), 1412-1450 (LKNYSILDTLQSYIEDKKHPTSRQGALFAFECLCNTIGR), 1454-1491 (PYIIHILPKLLVCFGDNVSEVRDATADTAKAIMSQLSG), 1492-1529 (HGVKIVLPALLKALDDRSWRTKEGSIELLGAMAFCAPK), 1533-1570 (SCLPTIVPKLTYVLNDTHTKVQEAAKEALSHIGSVIRN), 1572-1608 (EIQIHVPLLLQTYDDPEIHSKELLENLLSTNYVHTID), 1610-1647 (ASLSLLLPILERTLKERSSELKKMSCQIVGNLCSLTEP), 1652-1689 (PYLNILMPVMKTVLLDPIPEVRAICARALGLLVRGMGE), 1691-1728 (NFSTLIPWLLETVKSDQGAVERSGAAQGLSEVLASLDI), 1729-1766 (SRFNSLINELLAMTNSPRPHVREGILSIFIFTPISLGD), 1770-1807 (PYLPKVLPQVLKGLADDSDPVREVCMRCGQSIVLQFAV), and 1809-1845 (GIEVIVPALEKVLFHENWRIRLSCVQLFGDLLFKLAG). The disordered stretch occupies residues 1853–1875 (SNNSSYNAKDDDDDEPGSSGNDI). HEAT repeat units follow at residues 1882–1919 (ERLGRILSSLYMMRFDNNSSVRQKVLLIWKYIVSNTPK), 1923–1960 (EILPTLIEMIISSIGSNNVEKRQISAKTLGDIVSKLSD), 1962–1998 (ILPEILPILERGLRSELEETRQGVCIGLSEVISSAKT), 2002–2039 (PYLSSVVTCITKALCDPLIDVREAAAKAFDHLYHTFGS), 2040–2078 (KASNEILPQLIQLLDNSNNKDLAGYALDGLRQVILVRSS), 2080–2110 (VLPVLIPKLLSRPISTSNVTALSSLAADAGE), 2114–2152 (VHLSTIIPSLIESFTNPNTISNAKEIKEAAVSICKSIDE), 2154–2190 (GWDTLIGLLIEQTEIRLPNIRLGACELIGEFYNGNTM), 2193–2230 (EYPEELLLSLLSLFNDPDALVQQAANNALGFITKSLKK), and 2264–2301 (KGLASVLPVLISGLMYGTSDQREQATNTLRTVINHTSA). The RWDBD region stretch occupies residues 2265-2412 (GLASVLPVLI…ISQESKLRAL (148 aa)). One copy of the HEAT 37; degenerate repeat lies at 2326–2348 (QVKSAILQTLSLLISKSPASMKI). The stretch at 2349-2385 (FLHQLQPTFIKCLSDSHKNVRTNAASALGLLMTLSSS) is one HEAT 38; degenerate repeat. HEAT repeat units lie at residues 2387-2421 (DQLVNSLITGISTADSISQESKLRALQSIFEKKPK), 2425-2462 (ATLDKAIATIVDFLYQPSDDLRSMVAQTIGASSKCFTS), 2508-2545 (PNMPTIIKIIQTDCRDEKGPIRESSAYLAEAILVASPL), and 2546-2583 (TYAKDLVPSICHLIGDQSSSVSISALNVIKRFCKSNQQ).

It belongs to the GCN1 family. As to quaternary structure, interacts with eif2ak4/gcn2; this interaction stimulates the eif2ak4/gcn2 kinase activity and is impaired by impact upon a variety of stress conditions, such as amino acid depletion, UV-C irradiation, proteasome inhibitor treatment and glucose deprivation. Interacts with impact; this prevents the interaction of gcn1 with eif2ak4/gcn2 and inhibits eif2ak4/gcn2 kinase activity.

It localises to the cytoplasm. Functionally, ribosome collision sensor that activates a translation quality control pathway when a ribosome has stalled during translation. Directly binds to the ribosome and acts as a sentinel for colliding ribosomes. Gcn1 also acts as a positive activator of the integrated stress response (ISR) by mediating activation of eif2ak4/gcn2 in response to amino acid starvation. Interaction with eif2ak4/gcn2 on translating ribosomes stimulates eif2ak4/gcn2 kinase activity, leading to phosphorylation of eukaryotic translation initiation factor 2 (eIF-2-alpha/eif2s1). EIF2S1/eIF-2-alpha phosphorylation converts EIF2S1/eIF-2-alpha into a global protein synthesis inhibitor, leading to a global attenuation of cap-dependent translation, and thus to a reduced overall utilization of amino acids, while concomitantly initiating the preferential translation of ISR-specific mRNAs, such as the transcriptional activator atf4, and hence allowing atf4-mediated reprogramming of amino acid biosynthetic gene expression to alleviate nutrient depletion. This is eIF-2-alpha kinase activator GCN1 from Dictyostelium discoideum (Social amoeba).